The sequence spans 508 residues: Zinc finger CCCH-type with G patch domain-containing protein (508 aa).

The C3H1-type zinc-finger motif lies at 154–177; it reads PCNYYLEGECRFDETRCRYSHGAL. The tract at residues 253 to 279 is disordered; the sequence is DDELSSDSEETNETDGSDAANESDMDD. Residues 309–355 form the G-patch domain; the sequence is TRGIGSKLMASMGYIHGTGLGSDGRGIVTPVSAQILPQGRSLDACME. Residues 486–495 are compositionally biased toward polar residues; it reads QAQESSLSKE. The tract at residues 486–508 is disordered; the sequence is QAQESSLSKEQQTRKSKNKMFEF. The span at 499-508 shows a compositional bias: basic residues; that stretch reads RKSKNKMFEF.

Its subcellular location is the nucleus. Its function is as follows. Transcription repressor. This chain is Zinc finger CCCH-type with G patch domain-containing protein, found in Drosophila virilis (Fruit fly).